Consider the following 115-residue polypeptide: MGNFRFPIKTKLPPGFINARILRDNFKRQQFKENEILVKSLKFIARNMNLPTKLRLEAQLKLNALPNYMRSTQIKNRCVDSGHARFVLSDFRLCRYQFRENALKGNLPGVKKGIW.

The protein belongs to the universal ribosomal protein uS14 family. In terms of assembly, component of the mitochondrial small ribosomal subunit (mt-SSU). Mature yeast 74S mitochondrial ribosomes consist of a small (37S) and a large (54S) subunit. The 37S small subunit contains a 15S ribosomal RNA (15S mt-rRNA) and 34 different proteins. The 54S large subunit contains a 21S rRNA (21S mt-rRNA) and 46 different proteins.

It localises to the mitochondrion. Functionally, component of the mitochondrial ribosome (mitoribosome), a dedicated translation machinery responsible for the synthesis of mitochondrial genome-encoded proteins, including at least some of the essential transmembrane subunits of the mitochondrial respiratory chain. The mitoribosomes are attached to the mitochondrial inner membrane and translation products are cotranslationally integrated into the membrane. This chain is Small ribosomal subunit protein uS14m (MRP2), found in Saccharomyces cerevisiae (strain ATCC 204508 / S288c) (Baker's yeast).